The primary structure comprises 67 residues: DNA-directed RNA polymerase subunit omega (67 aa).

It belongs to the RNA polymerase subunit omega family. The RNAP catalytic core consists of 2 alpha, 1 beta, 1 beta' and 1 omega subunit. When a sigma factor is associated with the core the holoenzyme is formed, which can initiate transcription.

It carries out the reaction RNA(n) + a ribonucleoside 5'-triphosphate = RNA(n+1) + diphosphate. Functionally, promotes RNA polymerase assembly. Latches the N- and C-terminal regions of the beta' subunit thereby facilitating its interaction with the beta and alpha subunits. The sequence is that of DNA-directed RNA polymerase subunit omega from Ralstonia pickettii (strain 12J).